Consider the following 629-residue polypeptide: Bifunctional protein ArgHA (629 aa).

Positions 1-499 are argininosuccinate lyase; it reads MALWGGRFSQ…NLPRSRSDLV (499 aa). The 135-residue stretch at 464–598 folds into the N-acetyltransferase domain; it reads ISIRAARLTD…EKVLKDCDMC (135 aa). Residues 500–629 are amino-acid acetyltransferase; that stretch reads KAVGTFAVTE…INLKAEKLAS (130 aa).

The protein in the N-terminal section; belongs to the lyase 1 family. Argininosuccinate lyase subfamily. This sequence in the C-terminal section; belongs to the acetyltransferase family. ArgA subfamily.

It localises to the cytoplasm. The catalysed reaction is 2-(N(omega)-L-arginino)succinate = fumarate + L-arginine. The enzyme catalyses L-glutamate + acetyl-CoA = N-acetyl-L-glutamate + CoA + H(+). The protein operates within amino-acid biosynthesis; L-arginine biosynthesis; N(2)-acetyl-L-ornithine from L-glutamate: step 1/4. It functions in the pathway amino-acid biosynthesis; L-arginine biosynthesis; L-arginine from L-ornithine and carbamoyl phosphate: step 3/3. The sequence is that of Bifunctional protein ArgHA (argHA) from Moritella abyssi.